The sequence spans 448 residues: Trigger factor (448 aa).

Residues 172-257 form the PPIase FKBP-type domain; sequence GDRVTVDFVG…MKKIEWPHLP (86 aa).

It belongs to the FKBP-type PPIase family. Tig subfamily.

It localises to the cytoplasm. The enzyme catalyses [protein]-peptidylproline (omega=180) = [protein]-peptidylproline (omega=0). Its function is as follows. Involved in protein export. Acts as a chaperone by maintaining the newly synthesized protein in an open conformation. Functions as a peptidyl-prolyl cis-trans isomerase. In Paraburkholderia phymatum (strain DSM 17167 / CIP 108236 / LMG 21445 / STM815) (Burkholderia phymatum), this protein is Trigger factor.